The sequence spans 51 residues: MARNKPLGKKLRLAAALRSNRNPPVWVVAKTKRRVVRSPARRHWRRVKLKA.

It belongs to the eukaryotic ribosomal protein eL39 family.

In Pyrobaculum neutrophilum (strain DSM 2338 / JCM 9278 / NBRC 100436 / V24Sta) (Thermoproteus neutrophilus), this protein is Large ribosomal subunit protein eL39.